Reading from the N-terminus, the 508-residue chain is WD repeat-containing protein JIP5 (508 aa).

WD repeat units lie at residues 46 to 94 (LATG…GVET), 105 to 144 (RHKGSVRCICFDADGTHIYSVGTDNVLKKADTLTGKVVKK), 150 to 189 (GQNVKYTKLVKSATHPLVLLGDENGNVTVLNSESLEQTNL), 194 to 234 (HNGD…EGDF), 252 to 293 (DQED…LADQ), and 344 to 381 (SKLDEVTFLDLDSEYRLLSGGLDKAKLWDSEKSEQLTP). The segment at 372–508 (DSEKSEQLTP…THGIRRFEGL (137 aa)) is disordered. A compositionally biased stretch (basic and acidic residues) spans 491–508 (IKPERSMKTHGIRRFEGL).

The protein belongs to the WD repeat WDR55 family.

Its subcellular location is the nucleus. It is found in the nucleolus. This Eremothecium gossypii (strain ATCC 10895 / CBS 109.51 / FGSC 9923 / NRRL Y-1056) (Yeast) protein is WD repeat-containing protein JIP5 (JIP5).